Here is an 856-residue protein sequence, read N- to C-terminus: MAPKQDTPFRSADMSMVQLYISNEIGREVCNALGELGLVHFRDLNSELSAFQRAFTQDIRRLDNVERQLRYFHSQMEKAGIPLRKFDPDVDILTPPTTTEIDELAERAQTLEQRVSSLNESYETLKKREVELTEWRWVLREAGGFFDRAHGNVEEIRASTDNDDAPLLQDVEQHNTAADVERSFSGMNIGFVAGVIGRDRVDAFERILWRTLRGNLYMNQAEIPEPLIDPTINEPVLKNVFVIFAHGKEILAKIRRISESMGAEVYNVDEHSDLRRDQVHEVNARLEDVQNVLRNTQQTLEAELAQISQSLSAWMITISKEKAVYNTLNLFSYDRARRTLIAEGWCPTNDLPLIRSTLQDVNNRAGLSVPSIINEIRTNKTPPTYLKTNKFTEAFQTIVNAYGTATYQEVNPAIPVIVTFPFLFAVMFGDFGHALIMLCAALAMIYWEKPLKKVTFELFAMVFYGRYIVLVMAVFSVYTGLIYNDVFSKSMTLFDSQWKWVVPENFKEGMTVKAVLREPNGYRYPFGLDWRWHGTENELLFINSYKMKMAIILGWAHMTYSLCFSYINARHFKRPIDIWGNFVPGMIFFQSIFGYLVLCIIYKWSVDWFGTGRQPPGLLNMLIYMFLQPGTLDGGVELYPGQATVQVILLLLAVIQVPILLFLKPFYLRWENNRARAKGYRGIGERSRVSALDEDDEEDPSNGDDYEGAAMLTHDEHGDGEHEEFEFGEVMIHQVIHTIEFCLNSVSHTASYLRLWALSLAHQQLSAVLWSMTMAKALESKGLGGAIFLVVAFAMFFVLSVIILIIMEGVSAMLHSLRLAWVESFSKFAEFGGWPFTPFSFKQQLEESEELKEYIG.

The Cytoplasmic portion of the chain corresponds to 1 to 409 (MAPKQDTPFR…NAYGTATYQE (409 aa)). A helical transmembrane segment spans residues 410-428 (VNPAIPVIVTFPFLFAVMF). Residues 429-430 (GD) are Vacuolar-facing. Residues 431–447 (FGHALIMLCAALAMIYW) traverse the membrane as a helical segment. Over 448 to 460 (EKPLKKVTFELFA) the chain is Cytoplasmic. Residues 461–490 (MVFYGRYIVLVMAVFSVYTGLIYNDVFSKS) traverse the membrane as a helical segment. Residues 491 to 544 (MTLFDSQWKWVVPENFKEGMTVKAVLREPNGYRYPFGLDWRWHGTENELLFINS) are Vacuolar-facing. Residues 545–564 (YKMKMAIILGWAHMTYSLCF) form a helical membrane-spanning segment. The Cytoplasmic segment spans residues 565 to 582 (SYINARHFKRPIDIWGNF). The chain crosses the membrane as a helical span at residues 583-603 (VPGMIFFQSIFGYLVLCIIYK). Topologically, residues 604–648 (WSVDWFGTGRQPPGLLNMLIYMFLQPGTLDGGVELYPGQATVQVI) are vacuolar. The helical transmembrane segment at 649 to 668 (LLLLAVIQVPILLFLKPFYL) threads the bilayer. Topologically, residues 669-738 (RWENNRARAK…EVMIHQVIHT (70 aa)) are cytoplasmic. Residues 689-710 (VSALDEDDEEDPSNGDDYEGAA) are disordered. Over residues 692–707 (LDEDDEEDPSNGDDYE) the composition is skewed to acidic residues. Residues 739 to 763 (IEFCLNSVSHTASYLRLWALSLAHQ) form a helical membrane-spanning segment. At 764-784 (QLSAVLWSMTMAKALESKGLG) the chain is on the vacuolar side. Residues 785-823 (GAIFLVVAFAMFFVLSVIILIIMEGVSAMLHSLRLAWVE) traverse the membrane as a helical segment. The Cytoplasmic portion of the chain corresponds to 824-856 (SFSKFAEFGGWPFTPFSFKQQLEESEELKEYIG).

Belongs to the V-ATPase 116 kDa subunit family. V-ATPase is a heteromultimeric enzyme composed of a peripheral catalytic V1 complex (components A to H) attached to an integral membrane V0 proton pore complex (components: a, c, c', c'', d, e, f and VOA1).

The protein localises to the vacuole membrane. Its function is as follows. Subunit of the V0 complex of vacuolar(H+)-ATPase (V-ATPase), a multisubunit enzyme composed of a peripheral complex (V1) that hydrolyzes ATP and a membrane integral complex (V0) that translocates protons. V-ATPase is responsible for acidifying and maintaining the pH of intracellular compartments. This is V-type proton ATPase subunit a (vph-1) from Neurospora crassa (strain ATCC 24698 / 74-OR23-1A / CBS 708.71 / DSM 1257 / FGSC 987).